The following is a 495-amino-acid chain: UDP-glycosyltransferase 71B7 (495 aa).

Residues serine 284, 351-353 (APQ), 368-376 (HCGWNSTLE), and 390-393 (YAEQ) contribute to the UDP-alpha-D-glucose site.

It belongs to the UDP-glycosyltransferase family.

This chain is UDP-glycosyltransferase 71B7 (UGT71B7), found in Arabidopsis thaliana (Mouse-ear cress).